The chain runs to 450 residues: Mitochondrial distribution and morphology protein 10 (450 aa).

This sequence belongs to the MDM10 family. Component of the ER-mitochondria encounter structure (ERMES) or MDM complex, composed of MMM1, MDM10, MDM12 and MDM34. Associates with the mitochondrial outer membrane sorting assembly machinery SAM(core) complex.

It is found in the mitochondrion outer membrane. Component of the ERMES/MDM complex, which serves as a molecular tether to connect the endoplasmic reticulum and mitochondria. Components of this complex are involved in the control of mitochondrial shape and protein biogenesis and may function in phospholipid exchange. MDM10 is involved in the late assembly steps of the general translocase of the mitochondrial outer membrane (TOM complex). Functions in the TOM40-specific route of the assembly of outer membrane beta-barrel proteins, including the association of TOM40 with the receptor TOM22 and small TOM proteins. Can associate with the SAM(core) complex as well as the MDM12-MMM1 complex, both involved in late steps of the major beta-barrel assembly pathway, that is responsible for biogenesis of all outer membrane beta-barrel proteins. May act as a switch that shuttles between both complexes and channels precursor proteins into the TOM40-specific pathway. Plays a role in mitochondrial morphology and in the inheritance of mitochondria. The chain is Mitochondrial distribution and morphology protein 10 from Paracoccidioides lutzii (strain ATCC MYA-826 / Pb01) (Paracoccidioides brasiliensis).